Reading from the N-terminus, the 96-residue chain is Co-chaperonin GroES (96 aa).

Belongs to the GroES chaperonin family. In terms of assembly, heptamer of 7 subunits arranged in a ring. Interacts with the chaperonin GroEL.

Its subcellular location is the cytoplasm. Functionally, together with the chaperonin GroEL, plays an essential role in assisting protein folding. The GroEL-GroES system forms a nano-cage that allows encapsulation of the non-native substrate proteins and provides a physical environment optimized to promote and accelerate protein folding. GroES binds to the apical surface of the GroEL ring, thereby capping the opening of the GroEL channel. This is Co-chaperonin GroES from Alcanivorax borkumensis (strain ATCC 700651 / DSM 11573 / NCIMB 13689 / SK2).